The sequence spans 290 residues: Hydroxyacylglutathione hydrolase-like protein (290 aa).

Zn(2+) is bound by residues H54, H56, D58, H59, H110, D134, and H172.

This sequence belongs to the metallo-beta-lactamase superfamily. Glyoxalase II family. It depends on Zn(2+) as a cofactor.

Its function is as follows. Hydrolase acting on ester bonds. In Homo sapiens (Human), this protein is Hydroxyacylglutathione hydrolase-like protein (HAGHL).